The following is a 542-amino-acid chain: Protein lin-9 homolog (542 aa).

A2 carries the N-acetylalanine modification. Residues 2 to 296 (AELDQLPDES…QKQRPSRFFM (295 aa)) are sufficient for interaction with RB1. K21 participates in a covalent cross-link: Glycyl lysine isopeptide (Lys-Gly) (interchain with G-Cter in SUMO2). Phosphoserine occurs at positions 65 and 95. Phosphothreonine is present on residues T96 and T304. Phosphoserine occurs at positions 309 and 321. Positions 355 to 413 (IKKEHIKKLREMNTDAEKLKSYSMPISIEFQRRYATIVLELEQLNKDLNKVLHKVQQYC) form a coiled coil.

The protein belongs to the lin-9 family. As to quaternary structure, component of the DREAM complex (also named LINC complex) at least composed of E2F4, E2F5, LIN9, LIN37, LIN52, LIN54, MYBL1, MYBL2, RBL1, RBL2, RBBP4, TFDP1 and TFDP2. The complex exists in quiescent cells where it represses cell cycle-dependent genes. It dissociates in S phase when LIN9, LIN37, LIN52 and LIN54 form a subcomplex that binds to MYBL2. Interacts with RB1.

It localises to the nucleus. Its subcellular location is the nucleoplasm. Functionally, acts as a tumor suppressor. Inhibits DNA synthesis. Its ability to inhibit oncogenic transformation is mediated through its association with RB1. Plays a role in the expression of genes required for the G1/S transition. This chain is Protein lin-9 homolog (LIN9), found in Macaca fascicularis (Crab-eating macaque).